A 256-amino-acid polypeptide reads, in one-letter code: Trypsin alpha (256 aa).

An N-terminal signal peptide occupies residues 1–22 (MLKIVILLSAVVCALGGTVPEG). Positions 23-30 (LLPQLDGR) are cleaved as a propeptide — activation peptide. The region spanning 31-254 (IVGGSATTIS…LRSWVVSTAN (224 aa)) is the Peptidase S1 domain. A disulfide bond links Cys-56 and Cys-72. Catalysis depends on charge relay system residues His-71 and Asp-116. Intrachain disulfides connect Cys-180-Cys-197 and Cys-206-Cys-230. The active-site Charge relay system is the Ser-210.

The protein belongs to the peptidase S1 family. In terms of tissue distribution, synthesized in the midgut of both larvae and adults, primarily in the ventriculus and gastric caeca.

It is found in the secreted. It localises to the extracellular space. It catalyses the reaction Preferential cleavage: Arg-|-Xaa, Lys-|-Xaa.. The sequence is that of Trypsin alpha (alphaTry) from Drosophila melanogaster (Fruit fly).